Here is a 553-residue protein sequence, read N- to C-terminus: Dihydroxy-acid dehydratase (553 aa).

Asp78 provides a ligand contact to Mg(2+). Position 119 (Cys119) interacts with [2Fe-2S] cluster. Positions 120 and 121 each coordinate Mg(2+). Lys121 is subject to N6-carboxylysine. Cys191 serves as a coordination point for [2Fe-2S] cluster. Glu444 contributes to the Mg(2+) binding site. Ser470 acts as the Proton acceptor in catalysis.

This sequence belongs to the IlvD/Edd family. As to quaternary structure, homodimer. [2Fe-2S] cluster serves as cofactor. The cofactor is Mg(2+).

It carries out the reaction (2R)-2,3-dihydroxy-3-methylbutanoate = 3-methyl-2-oxobutanoate + H2O. The enzyme catalyses (2R,3R)-2,3-dihydroxy-3-methylpentanoate = (S)-3-methyl-2-oxopentanoate + H2O. The protein operates within amino-acid biosynthesis; L-isoleucine biosynthesis; L-isoleucine from 2-oxobutanoate: step 3/4. It participates in amino-acid biosynthesis; L-valine biosynthesis; L-valine from pyruvate: step 3/4. Functions in the biosynthesis of branched-chain amino acids. Catalyzes the dehydration of (2R,3R)-2,3-dihydroxy-3-methylpentanoate (2,3-dihydroxy-3-methylvalerate) into 2-oxo-3-methylpentanoate (2-oxo-3-methylvalerate) and of (2R)-2,3-dihydroxy-3-methylbutanoate (2,3-dihydroxyisovalerate) into 2-oxo-3-methylbutanoate (2-oxoisovalerate), the penultimate precursor to L-isoleucine and L-valine, respectively. This is Dihydroxy-acid dehydratase from Methanosarcina barkeri (strain Fusaro / DSM 804).